The primary structure comprises 314 residues: Probable UDP-sugar transporter protein SLC35A4 (314 aa).

Residues 1–20 (MIAISADESPESSSPALRLR) are Cytoplasmic-facing. A helical transmembrane segment spans residues 21–41 (WLFLLLLLVLIYGSHAPLLSL). Over 42–54 (CKTQAQIPFSASS) the chain is Lumenal. The helical transmembrane segment at 55–75 (CVLLIETSKLFISFASLLASG) threads the bilayer. Over 76–88 (SVSTLRISISMTT) the chain is Cytoplasmic. The chain crosses the membrane as a helical span at residues 89-109 (ASPYAVPAVLYAFNNHLVVFM). At 110–145 (QAYMDPSSFQVLSNLKIASTALLYTSCLGKRLHRRQ) the chain is on the lumenal side. Residues 146 to 166 (WFAMGLLVSAGVSHSCFSYDL) traverse the membrane as a helical segment. Residues 167–175 (EGKRETAVY) are Cytoplasmic-facing. A helical membrane pass occupies residues 176–196 (ITSWGLLLVLVYCFVSGLAAV). Residues 197 to 206 (YTERVLKSQR) are Lumenal-facing. Residues 207 to 227 (LPLSMQNLFLYTFGVVVNLAS) traverse the membrane as a helical segment. At 228–242 (HLSGGEQKGFFEGYS) the chain is on the cytoplasmic side. The helical transmembrane segment at 243 to 263 (AVVWVIVAGQVANGLLMSVVM) threads the bilayer. The Lumenal portion of the chain corresponds to 264–267 (KHGT). The helical transmembrane segment at 268–290 (GITRLFVISSAMLVNAVLSWGIL) threads the bilayer. Residues 291-314 (GVQLTGYFLFPVVLIGWAVYLYYT) lie on the Cytoplasmic side of the membrane.

This sequence belongs to the nucleotide-sugar transporter family. SLC35A subfamily.

It is found in the golgi apparatus membrane. The catalysed reaction is CDP-L-ribitol(in) + CDP(out) = CDP-L-ribitol(out) + CDP(in). Mediates the transport of CDP-ribitol. Does not exhibit CMP-sialic acid, UDP-galactose and UDP-N-acetylglucosamine transport activity. In Danio rerio (Zebrafish), this protein is Probable UDP-sugar transporter protein SLC35A4.